We begin with the raw amino-acid sequence, 276 residues long: Tryptophan synthase alpha chain (276 aa).

Residues Glu49 and Asp60 each act as proton acceptor in the active site.

The protein belongs to the TrpA family. As to quaternary structure, tetramer of two alpha and two beta chains.

The enzyme catalyses (1S,2R)-1-C-(indol-3-yl)glycerol 3-phosphate + L-serine = D-glyceraldehyde 3-phosphate + L-tryptophan + H2O. It functions in the pathway amino-acid biosynthesis; L-tryptophan biosynthesis; L-tryptophan from chorismate: step 5/5. Its function is as follows. The alpha subunit is responsible for the aldol cleavage of indoleglycerol phosphate to indole and glyceraldehyde 3-phosphate. The polypeptide is Tryptophan synthase alpha chain (Acidiphilium cryptum (strain JF-5)).